Reading from the N-terminus, the 158-residue chain is Cyclic pyranopterin monophosphate synthase (158 aa).

Substrate is bound by residues 75-77 and 111-112; these read LCH and ME. Asp126 is an active-site residue.

Belongs to the MoaC family. As to quaternary structure, homohexamer; trimer of dimers.

It catalyses the reaction (8S)-3',8-cyclo-7,8-dihydroguanosine 5'-triphosphate = cyclic pyranopterin phosphate + diphosphate. Its pathway is cofactor biosynthesis; molybdopterin biosynthesis. Catalyzes the conversion of (8S)-3',8-cyclo-7,8-dihydroguanosine 5'-triphosphate to cyclic pyranopterin monophosphate (cPMP). The chain is Cyclic pyranopterin monophosphate synthase from Caulobacter vibrioides (strain ATCC 19089 / CIP 103742 / CB 15) (Caulobacter crescentus).